A 985-amino-acid chain; its full sequence is DNA ligase 4 (985 aa).

2 disordered regions span residues Met1–His27 and Leu43–Ser70. Residues Glu10–Pro20 are compositionally biased toward basic and acidic residues. Positions Asn46–Gly61 are enriched in basic residues. Residues Glu310, Lys312, Leu313, Arg317, Glu379, Phe420, Glu480, Lys485, Lys502, and Lys504 each coordinate ATP. Catalysis depends on Lys312, which acts as the N6-AMP-lysine intermediate. Glu379 serves as a coordination point for Mg(2+). Glu480 is a binding site for Mg(2+). BRCT domains are found at residues Pro711–Leu804 and Leu878–Pro983.

This sequence belongs to the ATP-dependent DNA ligase family. Mg(2+) serves as cofactor.

It localises to the nucleus. The enzyme catalyses ATP + (deoxyribonucleotide)n-3'-hydroxyl + 5'-phospho-(deoxyribonucleotide)m = (deoxyribonucleotide)n+m + AMP + diphosphate.. In terms of biological role, DNA ligase involved in DNA non-homologous end joining (NHEJ); required for double-strand break (DSB) repair. The sequence is that of DNA ligase 4 (LIG4) from Coccidioides immitis (strain RS) (Valley fever fungus).